A 138-amino-acid chain; its full sequence is Small ribosomal subunit protein uS11 (138 aa).

Low complexity predominate over residues 1 to 12; the sequence is MPPAKKAAAAPK. The disordered stretch occupies residues 1–27; it reads MPPAKKAAAAPKKGQKTRRREKKNVPH. Basic residues predominate over residues 13 to 22; the sequence is KGQKTRRREK.

It belongs to the universal ribosomal protein uS11 family. In terms of assembly, part of the 30S ribosomal subunit. Interacts with proteins S7 and S18. Binds to IF-3.

In terms of biological role, located on the platform of the 30S subunit, it bridges several disparate RNA helices of the 16S rRNA. Forms part of the Shine-Dalgarno cleft in the 70S ribosome. This Mycolicibacterium paratuberculosis (strain ATCC BAA-968 / K-10) (Mycobacterium paratuberculosis) protein is Small ribosomal subunit protein uS11.